A 737-amino-acid chain; its full sequence is Transcription activator MSS11 (737 aa).

A disordered region spans residues 1-23; sequence MDNTTNINTNERSSNTDFSSAPN. The region spanning 51–83 is the LisH domain; it reads SKQLLYAHIYNYLIKNNYWNSAAKFLSEADLPL. Disordered stretches follow at residues 191–220, 268–347, 413–439, and 572–660; these read TQNSFPVSEESFRPNGDGSNFNLNDPTNRN, LQSP…PTNQ, GNQNYQSNTRNNTAEETTPTNDNNANG, and KTNT…TKES. Over residues 207–220 the composition is skewed to polar residues; that stretch reads DGSNFNLNDPTNRN. The segment covering 269–314 has biased composition (low complexity); the sequence is QSPAQPQQSSQQQIQQPQRQPQHQQQQQQQQQQQQQQQQQQQQQQQ. 3 stretches are compositionally biased toward polar residues: residues 330 to 347, 421 to 439, and 572 to 585; these read SENSHSTGLMPSVPPTNQ, TRNNTAEETTPTNDNNANG, and KTNTSVPQNDSTSV. The segment covering 590–643 has biased composition (low complexity); that stretch reads NNNNNNNNNNNNNNNSNNSNNNNNNNNSNNTPTVSQPSSKRTSSSSTTPNITTT. Over residues 646-655 the composition is skewed to basic residues; sequence PKRKQRVGKT.

This sequence belongs to the MSS11 family. In terms of assembly, interacts with FLO8, STE12 and TEC1.

It is found in the cytoplasm. It localises to the nucleus. Functionally, transcription factor that regulates pseudohyphal differentiation, invasive growth, floculation, adhesion and starch metabolism in response to nutrient availability. This is Transcription activator MSS11 (MSS11) from Saccharomyces cerevisiae (strain YJM789) (Baker's yeast).